A 309-amino-acid chain; its full sequence is Homoserine O-succinyltransferase (309 aa).

Catalysis depends on C142, which acts as the Acyl-thioester intermediate. 2 residues coordinate substrate: K163 and S192. H235 acts as the Proton acceptor in catalysis. Residue E237 is part of the active site. R249 serves as a coordination point for substrate.

The protein belongs to the MetA family.

It localises to the cytoplasm. The enzyme catalyses L-homoserine + succinyl-CoA = O-succinyl-L-homoserine + CoA. It functions in the pathway amino-acid biosynthesis; L-methionine biosynthesis via de novo pathway; O-succinyl-L-homoserine from L-homoserine: step 1/1. Transfers a succinyl group from succinyl-CoA to L-homoserine, forming succinyl-L-homoserine. The protein is Homoserine O-succinyltransferase of Serratia proteamaculans (strain 568).